Consider the following 230-residue polypeptide: MKDLPIIALDFESKEKVNQFLDLFDESLFVKVGMELFYQEGPQLINEIKERGHDVFLDLKLHDIPNTVGKAMEGLAKLNVDLVNVHAAGGVKMMSEAIKGLRKHNQHTKIIAVTQLTSTTEDMLRHEQNIQTSIEEAVLNYAKLANAAGLDGVVCSPLESRMLTEKLGTSFLKVTPGIRPKGASQDDQHRITTPEEARQLGSTHIVVGRPITQSDNPVESYHKIKESWLV.

Residues aspartate 10, lysine 31, 58–67, threonine 117, arginine 179, glutamine 188, glycine 208, and arginine 209 contribute to the substrate site; that span reads DLKLHDIPNT. The active-site Proton donor is lysine 60.

Belongs to the OMP decarboxylase family. Type 1 subfamily. Homodimer.

It carries out the reaction orotidine 5'-phosphate + H(+) = UMP + CO2. Its pathway is pyrimidine metabolism; UMP biosynthesis via de novo pathway; UMP from orotate: step 2/2. Its function is as follows. Catalyzes the decarboxylation of orotidine 5'-monophosphate (OMP) to uridine 5'-monophosphate (UMP). The protein is Orotidine 5'-phosphate decarboxylase of Staphylococcus aureus (strain Mu3 / ATCC 700698).